The sequence spans 295 residues: GTPase Era (295 aa).

The Era-type G domain occupies 5–172 (YCGYAAIIGR…EQAVHQLMPE (168 aa)). The interval 13-20 (GRPNVGKS) is G1. 13 to 20 (GRPNVGKS) contributes to the GTP binding site. Residues 39 to 43 (QTTRY) form a G2 region. Residues 60–63 (DTPG) are G3. GTP contacts are provided by residues 60–64 (DTPGL) and 121–124 (NKVD). Residues 121-124 (NKVD) form a G4 region. The tract at residues 151 to 153 (LSA) is G5. The 77-residue stretch at 203 to 279 (LGQEIPYSLA…FLQLWVKVKS (77 aa)) folds into the KH type-2 domain.

Belongs to the TRAFAC class TrmE-Era-EngA-EngB-Septin-like GTPase superfamily. Era GTPase family. Monomer.

The protein localises to the cytoplasm. The protein resides in the cell inner membrane. In terms of biological role, an essential GTPase that binds both GDP and GTP, with rapid nucleotide exchange. Plays a role in 16S rRNA processing and 30S ribosomal subunit biogenesis and possibly also in cell cycle regulation and energy metabolism. This is GTPase Era from Coxiella burnetii (strain CbuG_Q212) (Coxiella burnetii (strain Q212)).